The chain runs to 127 residues: Holo-[acyl-carrier-protein] synthase (127 aa).

D8 and E56 together coordinate Mg(2+).

This sequence belongs to the P-Pant transferase superfamily. AcpS family. Requires Mg(2+) as cofactor.

It is found in the cytoplasm. The catalysed reaction is apo-[ACP] + CoA = holo-[ACP] + adenosine 3',5'-bisphosphate + H(+). In terms of biological role, transfers the 4'-phosphopantetheine moiety from coenzyme A to a Ser of acyl-carrier-protein. The protein is Holo-[acyl-carrier-protein] synthase of Cytophaga hutchinsonii (strain ATCC 33406 / DSM 1761 / CIP 103989 / NBRC 15051 / NCIMB 9469 / D465).